The following is a 436-amino-acid chain: Drebrin-like protein (436 aa).

An ADF-H domain is found at 2–133 (AVNLSRNGPA…EPECIMEKVA (132 aa)). Phosphothreonine is present on Thr-26. Residue Ser-160 is modified to Phosphoserine. An N6-acetyllysine modification is found at Lys-176. A coiled-coil region spans residues 178 to 232 (NFWAKAEKEEENRRLEEKRRAEEEKQRLEEERRERELQEAARREQRYQEQHRSAG). Composition is skewed to basic and acidic residues over residues 185–229 (KEEE…EQHR) and 264–275 (HPREIFKQKERA). The disordered stretch occupies residues 185-371 (KEEENRRLEE…GSGHIDNYMQ (187 aa)). Polar residues predominate over residues 276-286 (MSTTSVSSSQP). Phosphoserine occurs at positions 277, 280, 283, and 291. Position 296 is an N6-acetyllysine (Lys-296). Thr-299 bears the Phosphothreonine mark. Ser-311 is modified (phosphoserine). Residues Tyr-340 and Tyr-350 each carry the phosphotyrosine modification. Residues 377–436 (GQGLCARALYDYQAADDTEISFDPENLITGIEVIDEGWWRGYGPDGHFGMFPANYVELIE) enclose the SH3 domain.

It belongs to the ABP1 family. As to quaternary structure, interacts with FGD1, MAP4K1 and PRAM1. Interacts with ANKRD54. Interacts with WASL and WIPF1. Interacts with SHANK2 and SHANK3. Interacts with both COBL and PACSIN1. Interacts with DNM1 and SYN1. Detected in brain (at protein level). Widely expressed in brain with highest levels in hippocampus and cerebral cortex. Located primarily in dendrites and, in moderate amounts, in cell bodies. Isoform 1 and isoform 3 are the predominant isoforms in brain.

It localises to the cytoplasm. The protein localises to the cytoskeleton. Its subcellular location is the cell projection. It is found in the lamellipodium. The protein resides in the ruffle. It localises to the cell cortex. The protein localises to the cytosol. Its subcellular location is the cell membrane. It is found in the synapse. The protein resides in the perikaryon. It localises to the neuron projection. The protein localises to the dendrite. Its subcellular location is the postsynaptic density. It is found in the golgi apparatus membrane. The protein resides in the cytoplasmic vesicle. It localises to the clathrin-coated vesicle membrane. The protein localises to the podosome. Its subcellular location is the early endosome. Its function is as follows. Adapter protein that binds F-actin and DNM1, and thereby plays a role in receptor-mediated endocytosis. Required for the formation of organized podosome rosettes. May act as a common effector of antigen receptor-signaling pathways in leukocytes. Acts as a key component of the immunological synapse that regulates T-cell activation by bridging TCRs and the actin cytoskeleton to gene activation and endocytic processes. Plays a role in the reorganization of the actin cytoskeleton, formation of cell projections, such as neurites, in neuron morphogenesis and synapse formation via its interaction with WASL and COBL. Does not bind G-actin and promote actin polymerization by itself. The polypeptide is Drebrin-like protein (Rattus norvegicus (Rat)).